Consider the following 714-residue polypeptide: Phosphate acetyltransferase (714 aa).

Positions 391 to 714 are phosphate acetyltransferase; that stretch reads AFRYQLTELA…LTAIQSAQQQ (324 aa).

It in the N-terminal section; belongs to the CobB/CobQ family. This sequence in the C-terminal section; belongs to the phosphate acetyltransferase and butyryltransferase family. Homohexamer.

It is found in the cytoplasm. The enzyme catalyses acetyl-CoA + phosphate = acetyl phosphate + CoA. Its pathway is metabolic intermediate biosynthesis; acetyl-CoA biosynthesis; acetyl-CoA from acetate: step 2/2. Its activity is regulated as follows. Inhibited by NADH and ATP. Pyruvate and PEP act as activators of the acetyl phosphate forming reaction while inhibiting the formation of acetyl-CoA. Functionally, involved in acetate metabolism. Catalyzes the reversible interconversion of acetyl-CoA and acetyl phosphate. The direction of the overall reaction changes depending on growth conditions. On minimal medium acetyl-CoA is generated. In rich medium acetyl-CoA is converted to acetate and allowing the cell to dump the excess of acetylation potential in exchange for energy in the form of ATP. The main pathway for acetate production during exponential phase. This chain is Phosphate acetyltransferase (pta), found in Escherichia coli (strain K12).